The primary structure comprises 101 residues: Small ribosomal subunit protein uS14 (101 aa).

This sequence belongs to the universal ribosomal protein uS14 family. As to quaternary structure, part of the 30S ribosomal subunit. Contacts proteins S3 and S10.

Its function is as follows. Binds 16S rRNA, required for the assembly of 30S particles and may also be responsible for determining the conformation of the 16S rRNA at the A site. This is Small ribosomal subunit protein uS14 from Roseobacter denitrificans (strain ATCC 33942 / OCh 114) (Erythrobacter sp. (strain OCh 114)).